Here is a 505-residue protein sequence, read N- to C-terminus: Aminoaldehyde dehydrogenase 1a (505 aa).

Aspartate 101 contacts Na(+). Residues 161–163 and 187–190 each bind NAD(+); these read TPW and KPSE. Residue leucine 191 coordinates Na(+). Residues 241 to 244 and glutamate 262 contribute to the NAD(+) site; that span reads SFET. The Proton acceptor role is filled by glutamate 262. Cysteine 296 acts as the Nucleophile in catalysis. Residues glutamate 395 and tryptophan 461 each contribute to the NAD(+) site.

Belongs to the aldehyde dehydrogenase family. In terms of assembly, forms homodimers.

It carries out the reaction 4-aminobutanal + NAD(+) + H2O = 4-aminobutanoate + NADH + 2 H(+). The catalysed reaction is 3-aminopropanal + NAD(+) + H2O = beta-alanine + NADH + 2 H(+). The enzyme catalyses 4-(trimethylamino)butanal + NAD(+) + H2O = 4-(trimethylamino)butanoate + NADH + 2 H(+). It catalyses the reaction 4-guanidinobutanal + NAD(+) + H2O = 4-guanidinobutanoate + NADH + 2 H(+). It carries out the reaction betaine aldehyde + NAD(+) + H2O = glycine betaine + NADH + 2 H(+). Its pathway is amine and polyamine biosynthesis; betaine biosynthesis via choline pathway; betaine from betaine aldehyde: step 1/1. Its function is as follows. Dehydrogenase that catalyzes the oxidation of several aminoaldehydes. Metabolizes and detoxifies aldehyde products of polyamine degradation to non-toxic amino acids. Catalyzes the oxidation of 4-aminobutanal and 3-aminopropanal to 4-aminobutanoate and beta-alanine, respectively. Catalyzes the oxidation of 4-(trimethylamino)butanal and 4-guanidinobutanal to 4-trimethylammoniobutanoate and 4-guanidinobutanoate, respectively. Catalyzes the oxidation of betaine aldehyde to glycine betaine. Dehydrogenase that catalyzes the oxidation of several aminoaldehydes. Catalyzes the oxidation of betaine aldehyde to glycine betaine. Catalyzes the oxidation of 4-(trimethylamino)butanal to 4-trimethylammoniobutanoate. In Zea mays (Maize), this protein is Aminoaldehyde dehydrogenase 1a.